A 204-amino-acid polypeptide reads, in one-letter code: 3-isopropylmalate dehydratase small subunit (204 aa).

This sequence belongs to the LeuD family. LeuD type 1 subfamily. In terms of assembly, heterodimer of LeuC and LeuD.

It carries out the reaction (2R,3S)-3-isopropylmalate = (2S)-2-isopropylmalate. The protein operates within amino-acid biosynthesis; L-leucine biosynthesis; L-leucine from 3-methyl-2-oxobutanoate: step 2/4. Catalyzes the isomerization between 2-isopropylmalate and 3-isopropylmalate, via the formation of 2-isopropylmaleate. This Vesicomyosocius okutanii subsp. Calyptogena okutanii (strain HA) protein is 3-isopropylmalate dehydratase small subunit.